The chain runs to 124 residues: Large ribosomal subunit protein bL12 (124 aa).

The protein belongs to the bacterial ribosomal protein bL12 family. In terms of assembly, homodimer. Part of the ribosomal stalk of the 50S ribosomal subunit. Forms a multimeric L10(L12)X complex, where L10 forms an elongated spine to which 2 to 4 L12 dimers bind in a sequential fashion. Binds GTP-bound translation factors.

Functionally, forms part of the ribosomal stalk which helps the ribosome interact with GTP-bound translation factors. Is thus essential for accurate translation. The sequence is that of Large ribosomal subunit protein bL12 from Nautilia profundicola (strain ATCC BAA-1463 / DSM 18972 / AmH).